The sequence spans 109 residues: Large ribosomal subunit protein uL22 (109 aa).

It belongs to the universal ribosomal protein uL22 family. In terms of assembly, part of the 50S ribosomal subunit.

Functionally, this protein binds specifically to 23S rRNA; its binding is stimulated by other ribosomal proteins, e.g. L4, L17, and L20. It is important during the early stages of 50S assembly. It makes multiple contacts with different domains of the 23S rRNA in the assembled 50S subunit and ribosome. In terms of biological role, the globular domain of the protein is located near the polypeptide exit tunnel on the outside of the subunit, while an extended beta-hairpin is found that lines the wall of the exit tunnel in the center of the 70S ribosome. This chain is Large ribosomal subunit protein uL22, found in Paraburkholderia xenovorans (strain LB400).